The following is a 174-amino-acid chain: Crossover junction endodeoxyribonuclease RuvC (174 aa).

Catalysis depends on residues Asp16, Glu76, and Asp148. The Mg(2+) site is built by Asp16, Glu76, and Asp148.

The protein belongs to the RuvC family. In terms of assembly, homodimer which binds Holliday junction (HJ) DNA. The HJ becomes 2-fold symmetrical on binding to RuvC with unstacked arms; it has a different conformation from HJ DNA in complex with RuvA. In the full resolvosome a probable DNA-RuvA(4)-RuvB(12)-RuvC(2) complex forms which resolves the HJ. Mg(2+) serves as cofactor.

It is found in the cytoplasm. The catalysed reaction is Endonucleolytic cleavage at a junction such as a reciprocal single-stranded crossover between two homologous DNA duplexes (Holliday junction).. Functionally, the RuvA-RuvB-RuvC complex processes Holliday junction (HJ) DNA during genetic recombination and DNA repair. Endonuclease that resolves HJ intermediates. Cleaves cruciform DNA by making single-stranded nicks across the HJ at symmetrical positions within the homologous arms, yielding a 5'-phosphate and a 3'-hydroxyl group; requires a central core of homology in the junction. The consensus cleavage sequence is 5'-(A/T)TT(C/G)-3'. Cleavage occurs on the 3'-side of the TT dinucleotide at the point of strand exchange. HJ branch migration catalyzed by RuvA-RuvB allows RuvC to scan DNA until it finds its consensus sequence, where it cleaves and resolves the cruciform DNA. This chain is Crossover junction endodeoxyribonuclease RuvC, found in Rhodopseudomonas palustris (strain ATCC BAA-98 / CGA009).